The chain runs to 165 residues: Yapsin-5 (165 aa).

An N-terminal signal peptide occupies residues 1 to 24 (MQLFSILSLLSSLMCSLTVLGSSA). N-linked (GlcNAc...) asparagine glycosylation is present at asparagine 57. The Peptidase A1 domain maps to 67 to 165 (YVVKMEIGTP…TRLSSMTYTY (99 aa)).

The protein belongs to the peptidase A1 family.

In Saccharomyces cerevisiae (strain ATCC 204508 / S288c) (Baker's yeast), this protein is Yapsin-5 (YPS5).